The following is a 427-amino-acid chain: 3-phosphoshikimate 1-carboxyvinyltransferase (427 aa).

3-phosphoshikimate contacts are provided by Lys20, Ser21, and Arg25. Residue Lys20 participates in phosphoenolpyruvate binding. Residues Gly92 and Arg120 each coordinate phosphoenolpyruvate. 3-phosphoshikimate contacts are provided by Ser166, Gln168, Asp312, and Lys339. Gln168 is a phosphoenolpyruvate binding site. Catalysis depends on Asp312, which acts as the Proton acceptor. Phosphoenolpyruvate contacts are provided by Arg343 and Arg385.

It belongs to the EPSP synthase family. Monomer.

Its subcellular location is the cytoplasm. It catalyses the reaction 3-phosphoshikimate + phosphoenolpyruvate = 5-O-(1-carboxyvinyl)-3-phosphoshikimate + phosphate. It functions in the pathway metabolic intermediate biosynthesis; chorismate biosynthesis; chorismate from D-erythrose 4-phosphate and phosphoenolpyruvate: step 6/7. In terms of biological role, catalyzes the transfer of the enolpyruvyl moiety of phosphoenolpyruvate (PEP) to the 5-hydroxyl of shikimate-3-phosphate (S3P) to produce enolpyruvyl shikimate-3-phosphate and inorganic phosphate. The chain is 3-phosphoshikimate 1-carboxyvinyltransferase from Streptococcus equi subsp. zooepidemicus (strain H70).